Here is a 148-residue protein sequence, read N- to C-terminus: Large ribosomal subunit protein bL9 (148 aa).

The protein belongs to the bacterial ribosomal protein bL9 family.

In terms of biological role, binds to the 23S rRNA. The protein is Large ribosomal subunit protein bL9 of Frankia casuarinae (strain DSM 45818 / CECT 9043 / HFP020203 / CcI3).